The primary structure comprises 294 residues: 3-methyl-2-oxobutanoate hydroxymethyltransferase (294 aa).

Polar residues predominate over residues methionine 1–proline 12. Residues methionine 1–alanine 21 are disordered. Mg(2+) contacts are provided by aspartate 69 and aspartate 112. Residues aspartate 69–serine 70, aspartate 112, and lysine 141 each bind 3-methyl-2-oxobutanoate. Glutamate 143 contributes to the Mg(2+) binding site. The active-site Proton acceptor is glutamate 210.

It belongs to the PanB family. Homodecamer; pentamer of dimers. It depends on Mg(2+) as a cofactor.

It is found in the cytoplasm. The enzyme catalyses 3-methyl-2-oxobutanoate + (6R)-5,10-methylene-5,6,7,8-tetrahydrofolate + H2O = 2-dehydropantoate + (6S)-5,6,7,8-tetrahydrofolate. It functions in the pathway cofactor biosynthesis; (R)-pantothenate biosynthesis; (R)-pantoate from 3-methyl-2-oxobutanoate: step 1/2. In terms of biological role, catalyzes the reversible reaction in which hydroxymethyl group from 5,10-methylenetetrahydrofolate is transferred onto alpha-ketoisovalerate to form ketopantoate. The protein is 3-methyl-2-oxobutanoate hydroxymethyltransferase of Albidiferax ferrireducens (strain ATCC BAA-621 / DSM 15236 / T118) (Rhodoferax ferrireducens).